The primary structure comprises 282 residues: Acyl-CoA-binding domain-containing protein 6 (282 aa).

The tract at residues 1-39 is disordered; the sequence is MATPFLPSGATTGDSGGELSSGDDSGDMESFQTPEAEGT. Ser41 is modified (phosphoserine). The ACB domain occupies 42-127; sequence LAELFEKAAA…VKKLDPGWNP (86 aa). Residues 69 to 73 and Lys95 each bind an acyl-CoA; that span reads YARFK. Ser106 is modified (phosphoserine). Tyr114 serves as a coordination point for an acyl-CoA. 2 ANK repeats span residues 191–220 and 224–253; these read EGRALLHWACDRGHKELVKVLLQYEAGINC and EGQTALHYAAACEFLDIVELLLQSGADPTL.

In terms of assembly, monomer.

The protein localises to the cytoplasm. It is found in the nucleus. Binds long-chain acyl-coenzyme A molecules with a strong preference for unsaturated C18:1-CoA, lower affinity for unsaturated C20:4-CoA, and very weak affinity for saturated C16:0-CoA. Does not bind fatty acids. Plays a role in protein N-myristoylation. The protein is Acyl-CoA-binding domain-containing protein 6 (Acbd6) of Mus musculus (Mouse).